The primary structure comprises 328 residues: Protease HtpX homolog (328 aa).

The next 2 helical transmembrane spans lie at threonine 6 to glycine 26 and serine 28 to serine 48. Position 130 (histidine 130) interacts with Zn(2+). Glutamate 131 is a catalytic residue. A Zn(2+)-binding site is contributed by histidine 134. 2 consecutive transmembrane segments (helical) span residues isoleucine 145–glycine 165 and proline 172–valine 192. Glutamate 201 is a binding site for Zn(2+). The interval glutamine 279 to serine 328 is disordered. A compositionally biased stretch (low complexity) spans serine 287–proline 299.

The protein belongs to the peptidase M48B family. It depends on Zn(2+) as a cofactor.

It is found in the cell inner membrane. The polypeptide is Protease HtpX homolog (Rhizobium rhizogenes (strain K84 / ATCC BAA-868) (Agrobacterium radiobacter)).